A 215-amino-acid chain; its full sequence is Proteasome subunit beta (215 aa).

The propeptide at 1–12 is removed in mature form; by autocatalysis; that stretch reads MLGEIQDKVYKG. Residue Thr-13 is the Nucleophile of the active site.

It belongs to the peptidase T1B family. In terms of assembly, the 20S proteasome core is composed of 14 alpha and 14 beta subunits that assemble into four stacked heptameric rings, resulting in a barrel-shaped structure. The two inner rings, each composed of seven catalytic beta subunits, are sandwiched by two outer rings, each composed of seven alpha subunits. The catalytic chamber with the active sites is on the inside of the barrel. Has a gated structure, the ends of the cylinder being occluded by the N-termini of the alpha-subunits. Is capped at one or both ends by the proteasome regulatory ATPase, PAN.

Its subcellular location is the cytoplasm. It carries out the reaction Cleavage of peptide bonds with very broad specificity.. Its activity is regulated as follows. The formation of the proteasomal ATPase PAN-20S proteasome complex, via the docking of the C-termini of PAN into the intersubunit pockets in the alpha-rings, triggers opening of the gate for substrate entry. Interconversion between the open-gate and close-gate conformations leads to a dynamic regulation of the 20S proteasome proteolysis activity. In terms of biological role, component of the proteasome core, a large protease complex with broad specificity involved in protein degradation. The chain is Proteasome subunit beta from Archaeoglobus profundus (strain DSM 5631 / JCM 9629 / NBRC 100127 / Av18).